The chain runs to 66 residues: Large ribosomal subunit protein bL35 (66 aa).

The span at 1-16 shows a compositional bias: basic residues; that stretch reads MPKQKTHRASAKRFKR. The tract at residues 1-21 is disordered; the sequence is MPKQKTHRASAKRFKRTGSGG.

It belongs to the bacterial ribosomal protein bL35 family.

This Streptococcus agalactiae serotype Ia (strain ATCC 27591 / A909 / CDC SS700) protein is Large ribosomal subunit protein bL35.